Consider the following 213-residue polypeptide: tRNA (guanine-N(7)-)-methyltransferase (213 aa).

The S-adenosyl-L-methionine site is built by glutamate 44, glutamate 69, aspartate 96, and aspartate 118. Aspartate 118 is a catalytic residue. Substrate-binding positions include lysine 122, aspartate 154, and 192–195 (TEYE).

The protein belongs to the class I-like SAM-binding methyltransferase superfamily. TrmB family.

It catalyses the reaction guanosine(46) in tRNA + S-adenosyl-L-methionine = N(7)-methylguanosine(46) in tRNA + S-adenosyl-L-homocysteine. It participates in tRNA modification; N(7)-methylguanine-tRNA biosynthesis. Catalyzes the formation of N(7)-methylguanine at position 46 (m7G46) in tRNA. This is tRNA (guanine-N(7)-)-methyltransferase from Limosilactobacillus reuteri (strain DSM 20016) (Lactobacillus reuteri).